The sequence spans 315 residues: Cobalamin biosynthesis protein CobD (315 aa).

A run of 5 helical transmembrane segments spans residues 48–68 (IAGFFAWLFIVFITFGVTLGI), 77–97 (PILGTVVSGILIYFCISAKGL), 150–170 (DGIIAPLFFAGIGGAPLAFLY), 200–220 (VFNYIPARLTAYLIVISSFIL), and 295–315 (MVSFLGMVVALIIRCILEVII).

This sequence belongs to the CobD/CbiB family.

Its subcellular location is the cell membrane. It participates in cofactor biosynthesis; adenosylcobalamin biosynthesis. Functionally, converts cobyric acid to cobinamide by the addition of aminopropanol on the F carboxylic group. This Clostridium perfringens (strain 13 / Type A) protein is Cobalamin biosynthesis protein CobD.